Here is a 427-residue protein sequence, read N- to C-terminus: 3-phosphoshikimate 1-carboxyvinyltransferase (427 aa).

Residues lysine 22, serine 23, and arginine 27 each contribute to the 3-phosphoshikimate site. Lysine 22 contributes to the phosphoenolpyruvate binding site. 2 residues coordinate phosphoenolpyruvate: glycine 96 and arginine 124. Residues serine 170, serine 171, glutamine 172, serine 199, aspartate 313, asparagine 336, and lysine 340 each contribute to the 3-phosphoshikimate site. Glutamine 172 contacts phosphoenolpyruvate. The active-site Proton acceptor is the aspartate 313. The phosphoenolpyruvate site is built by arginine 344, arginine 386, and lysine 411.

Belongs to the EPSP synthase family. In terms of assembly, monomer.

It localises to the cytoplasm. It catalyses the reaction 3-phosphoshikimate + phosphoenolpyruvate = 5-O-(1-carboxyvinyl)-3-phosphoshikimate + phosphate. Its pathway is metabolic intermediate biosynthesis; chorismate biosynthesis; chorismate from D-erythrose 4-phosphate and phosphoenolpyruvate: step 6/7. Its function is as follows. Catalyzes the transfer of the enolpyruvyl moiety of phosphoenolpyruvate (PEP) to the 5-hydroxyl of shikimate-3-phosphate (S3P) to produce enolpyruvyl shikimate-3-phosphate and inorganic phosphate. The protein is 3-phosphoshikimate 1-carboxyvinyltransferase of Aeromonas salmonicida.